A 412-amino-acid polypeptide reads, in one-letter code: Multifunctional CCA protein (412 aa).

Residues Gly8 and Arg11 each coordinate ATP. 2 residues coordinate CTP: Gly8 and Arg11. Mg(2+)-binding residues include Glu21 and Asp23. Residues Arg92, Arg138, and Arg141 each contribute to the ATP site. CTP contacts are provided by Arg92, Arg138, and Arg141. Residues 227–328 (TGIHTMMTVA…IKLFYAIDVW (102 aa)) form the HD domain.

The protein belongs to the tRNA nucleotidyltransferase/poly(A) polymerase family. Bacterial CCA-adding enzyme type 1 subfamily. In terms of assembly, monomer. Can also form homodimers and oligomers. Mg(2+) is required as a cofactor. Ni(2+) serves as cofactor.

The enzyme catalyses a tRNA precursor + 2 CTP + ATP = a tRNA with a 3' CCA end + 3 diphosphate. The catalysed reaction is a tRNA with a 3' CCA end + 2 CTP + ATP = a tRNA with a 3' CCACCA end + 3 diphosphate. Functionally, catalyzes the addition and repair of the essential 3'-terminal CCA sequence in tRNAs without using a nucleic acid template. Adds these three nucleotides in the order of C, C, and A to the tRNA nucleotide-73, using CTP and ATP as substrates and producing inorganic pyrophosphate. tRNA 3'-terminal CCA addition is required both for tRNA processing and repair. Also involved in tRNA surveillance by mediating tandem CCA addition to generate a CCACCA at the 3' terminus of unstable tRNAs. While stable tRNAs receive only 3'-terminal CCA, unstable tRNAs are marked with CCACCA and rapidly degraded. The sequence is that of Multifunctional CCA protein from Baumannia cicadellinicola subsp. Homalodisca coagulata.